A 206-amino-acid polypeptide reads, in one-letter code: Acireductone dioxygenase (206 aa).

Fe(2+) contacts are provided by His102, His104, Glu108, and His146. Positions 102, 104, 108, and 146 each coordinate Ni(2+).

Belongs to the acireductone dioxygenase (ARD) family. In terms of assembly, monomer. Fe(2+) is required as a cofactor. The cofactor is Ni(2+).

The enzyme catalyses 1,2-dihydroxy-5-(methylsulfanyl)pent-1-en-3-one + O2 = 3-(methylsulfanyl)propanoate + CO + formate + 2 H(+). It catalyses the reaction 1,2-dihydroxy-5-(methylsulfanyl)pent-1-en-3-one + O2 = 4-methylsulfanyl-2-oxobutanoate + formate + 2 H(+). It functions in the pathway amino-acid biosynthesis; L-methionine biosynthesis via salvage pathway; L-methionine from S-methyl-5-thio-alpha-D-ribose 1-phosphate: step 5/6. Its function is as follows. Catalyzes 2 different reactions between oxygen and the acireductone 1,2-dihydroxy-3-keto-5-methylthiopentene (DHK-MTPene) depending upon the metal bound in the active site. Fe-containing acireductone dioxygenase (Fe-ARD) produces formate and 2-keto-4-methylthiobutyrate (KMTB), the alpha-ketoacid precursor of methionine in the methionine recycle pathway. Ni-containing acireductone dioxygenase (Ni-ARD) produces methylthiopropionate, carbon monoxide and formate, and does not lie on the methionine recycle pathway. This is Acireductone dioxygenase from Frankia alni (strain DSM 45986 / CECT 9034 / ACN14a).